Here is a 530-residue protein sequence, read N- to C-terminus: Bifunctional purine biosynthesis protein PurH (530 aa).

The MGS-like domain maps to 1–148 (MNNPRPIRRA…KNHKDVTIVV (148 aa)).

The protein belongs to the PurH family.

It catalyses the reaction (6R)-10-formyltetrahydrofolate + 5-amino-1-(5-phospho-beta-D-ribosyl)imidazole-4-carboxamide = 5-formamido-1-(5-phospho-D-ribosyl)imidazole-4-carboxamide + (6S)-5,6,7,8-tetrahydrofolate. The catalysed reaction is IMP + H2O = 5-formamido-1-(5-phospho-D-ribosyl)imidazole-4-carboxamide. The protein operates within purine metabolism; IMP biosynthesis via de novo pathway; 5-formamido-1-(5-phospho-D-ribosyl)imidazole-4-carboxamide from 5-amino-1-(5-phospho-D-ribosyl)imidazole-4-carboxamide (10-formyl THF route): step 1/1. Its pathway is purine metabolism; IMP biosynthesis via de novo pathway; IMP from 5-formamido-1-(5-phospho-D-ribosyl)imidazole-4-carboxamide: step 1/1. The chain is Bifunctional purine biosynthesis protein PurH from Aliivibrio salmonicida (strain LFI1238) (Vibrio salmonicida (strain LFI1238)).